The primary structure comprises 357 residues: Transcription factor PCF6 (357 aa).

A disordered region spans residues 1-29 (MEAAVGDGEGGGGGGGRGKRGRGGGGGEM). A compositionally biased stretch (gly residues) spans 7 to 16 (DGEGGGGGGG). The region spanning 52-110 (GKDRHSKVYTAKGIRDRRVRLSVATAIQFYDLQDRLGFDQPSKAIEWLINAASPAIDTL) is the TCP domain. Disordered regions lie at residues 125 to 162 (AADAAPTRRRSQQQQQQLSNKSGCSSTSETSKGSDKEV) and 281 to 307 (ANRGTLQSNSPSNMSGHHHHHHQQQLQ). 2 stretches are compositionally biased toward polar residues: residues 142-155 (LSNKSGCSSTSETS) and 284-295 (GTLQSNSPSNMS).

In terms of assembly, forms homodimers and heterodimers.

The protein localises to the nucleus. In terms of biological role, transcription activator. Binds the promoter core sequence 5'-GGNCC-3'. The chain is Transcription factor PCF6 (PCF6) from Oryza sativa subsp. japonica (Rice).